Reading from the N-terminus, the 74-residue chain is ATP synthase subunit 9, mitochondrial (74 aa).

2 consecutive transmembrane segments (helical) span residues isoleucine 8 to phenylalanine 28 and isoleucine 50 to isoleucine 70.

This sequence belongs to the ATPase C chain family. In terms of assembly, F-type ATPases have 2 components, CF(1) - the catalytic core - and CF(0) - the membrane proton channel. CF(1) has five subunits: alpha(3), beta(3), gamma(1), delta(1), epsilon(1). CF(0) has three main subunits: a, b and c.

The protein localises to the mitochondrion membrane. In terms of biological role, mitochondrial membrane ATP synthase (F(1)F(0) ATP synthase or Complex V) produces ATP from ADP in the presence of a proton gradient across the membrane which is generated by electron transport complexes of the respiratory chain. F-type ATPases consist of two structural domains, F(1) - containing the extramembraneous catalytic core and F(0) - containing the membrane proton channel, linked together by a central stalk and a peripheral stalk. During catalysis, ATP synthesis in the catalytic domain of F(1) is coupled via a rotary mechanism of the central stalk subunits to proton translocation. Part of the complex F(0) domain. A homomeric c-ring of probably 10 subunits is part of the complex rotary element. This is ATP synthase subunit 9, mitochondrial (atp9) from Schizosaccharomyces pombe (strain 972 / ATCC 24843) (Fission yeast).